Reading from the N-terminus, the 394-residue chain is S-adenosylmethionine synthase (394 aa).

Glutamate 10 provides a ligand contact to Mg(2+). Position 16 (histidine 16) interacts with ATP. Residue glutamate 44 coordinates K(+). The L-methionine site is built by glutamate 57 and glutamine 100. ATP contacts are provided by residues 168–170 (DGK), 236–239 (SGRF), aspartate 247, 253–254 (RK), alanine 270, lysine 274, and lysine 278. Aspartate 247 provides a ligand contact to L-methionine. Lysine 278 contributes to the L-methionine binding site.

Belongs to the AdoMet synthase family. As to quaternary structure, homotetramer. Mn(2+) serves as cofactor. Mg(2+) is required as a cofactor. Requires Co(2+) as cofactor. The cofactor is K(+).

The protein resides in the cytoplasm. It carries out the reaction L-methionine + ATP + H2O = S-adenosyl-L-methionine + phosphate + diphosphate. It participates in amino-acid biosynthesis; S-adenosyl-L-methionine biosynthesis; S-adenosyl-L-methionine from L-methionine: step 1/1. In terms of biological role, catalyzes the formation of S-adenosylmethionine from methionine and ATP. The reaction comprises two steps that are both catalyzed by the same enzyme: formation of S-adenosylmethionine (AdoMet) and triphosphate, and subsequent hydrolysis of the triphosphate. This Medicago truncatula (Barrel medic) protein is S-adenosylmethionine synthase (METK).